The following is a 540-amino-acid chain: Glucose-6-phosphate isomerase (540 aa).

Glutamate 346 acts as the Proton donor in catalysis. Residues histidine 377 and lysine 505 contribute to the active site.

It belongs to the GPI family.

It is found in the cytoplasm. The catalysed reaction is alpha-D-glucose 6-phosphate = beta-D-fructose 6-phosphate. The protein operates within carbohydrate biosynthesis; gluconeogenesis. It participates in carbohydrate degradation; glycolysis; D-glyceraldehyde 3-phosphate and glycerone phosphate from D-glucose: step 2/4. Functionally, catalyzes the reversible isomerization of glucose-6-phosphate to fructose-6-phosphate. In Francisella tularensis subsp. tularensis (strain SCHU S4 / Schu 4), this protein is Glucose-6-phosphate isomerase.